Reading from the N-terminus, the 296-residue chain is Indole-3-glycerol phosphate synthase (296 aa).

Belongs to the TrpC family.

It catalyses the reaction 1-(2-carboxyphenylamino)-1-deoxy-D-ribulose 5-phosphate + H(+) = (1S,2R)-1-C-(indol-3-yl)glycerol 3-phosphate + CO2 + H2O. The protein operates within amino-acid biosynthesis; L-tryptophan biosynthesis; L-tryptophan from chorismate: step 4/5. This is Indole-3-glycerol phosphate synthase from Microcystis aeruginosa (strain NIES-843 / IAM M-2473).